The sequence spans 96 residues: UPF0235 protein YggU (96 aa).

It belongs to the UPF0235 family.

This chain is UPF0235 protein YggU, found in Shigella flexneri.